The sequence spans 546 residues: Delta-1-pyrroline-5-carboxylate dehydrogenase (546 aa).

279-284 is a binding site for NAD(+); it reads KDISSN. The active-site Proton acceptor is the Glu297. The active-site Nucleophile is the Cys331.

It belongs to the aldehyde dehydrogenase family.

The protein localises to the cytoplasm. The catalysed reaction is L-glutamate 5-semialdehyde + NAD(+) + H2O = L-glutamate + NADH + 2 H(+). The protein operates within amino-acid degradation; L-proline degradation into L-glutamate; L-glutamate from L-proline: step 2/2. This chain is Delta-1-pyrroline-5-carboxylate dehydrogenase (pruA), found in Agaricus bisporus (White button mushroom).